The chain runs to 268 residues: Fibroblast growth factor 5 (268 aa).

A signal peptide spans 1 to 20; sequence MSLSFLLLLFFSHLILSAWA. The tract at residues 26-81 is disordered; it reads LAPKGQPGPAATDRNPRGSSSRQSSSSAMSSSSASSSPAASLGSQGSGLEQSSFQW. Over residues 43–80 the composition is skewed to low complexity; that stretch reads GSSSRQSSSSAMSSSSASSSPAASLGSQGSGLEQSSFQ. Residue N110 is glycosylated (N-linked (GlcNAc...) asparagine). The segment at 233–255 is disordered; it reads VPEKKKPPSPIKPKIPLSAPRKN.

Belongs to the heparin-binding growth factors family. Interacts with FGFR1 and FGFR2. Affinity between fibroblast growth factors (FGFs) and their receptors is increased by heparan sulfate glycosaminoglycans that function as coreceptors. As to expression, expressed in neonatal brain.

It localises to the secreted. Functionally, plays an important role in the regulation of cell proliferation and cell differentiation. Required for normal regulation of the hair growth cycle. Functions as an inhibitor of hair elongation by promoting progression from anagen, the growth phase of the hair follicle, into catagen the apoptosis-induced regression phase. This is Fibroblast growth factor 5 (FGF5) from Homo sapiens (Human).